The primary structure comprises 874 residues: Probable RNA-directed RNA polymerase (874 aa).

Belongs to the totiviridae RNA-directed RNA polymerase family.

It carries out the reaction RNA(n) + a ribonucleoside 5'-triphosphate = RNA(n+1) + diphosphate. In terms of biological role, RNA-dependent RNA polymerase which replicates the viral genome. Catalyzes the transcription of fully conservative plus-strand genomic RNAs that are extruded from the virion into the cytoplasm where they function as mRNAs for translation of viral proteins and also as substrates for encapsidation to form new virions. Once encapsidated, the positive strand is converted to dsRNA by the RNA-directed RNA polymerase. Displays ssRNA-binding activity. The polypeptide is Probable RNA-directed RNA polymerase (ORF3) (Leishmania major (LRV-1-1)).